A 238-amino-acid polypeptide reads, in one-letter code: Ribitol-5-phosphate cytidylyltransferase 1 (238 aa).

Residues 7–10 (LAGG) and 81–87 (GSDRNDT) contribute to the CTP site.

It belongs to the IspD/TarI cytidylyltransferase family. TarI subfamily.

The catalysed reaction is D-ribitol 5-phosphate + CTP + H(+) = CDP-L-ribitol + diphosphate. The protein operates within cell wall biogenesis; poly(ribitol phosphate) teichoic acid biosynthesis. Catalyzes the transfer of the cytidylyl group of CTP to D-ribitol 5-phosphate. This Staphylococcus aureus (strain USA300) protein is Ribitol-5-phosphate cytidylyltransferase 1.